A 64-amino-acid chain; its full sequence is uncharacterized protein (64 aa).

A helical transmembrane segment spans residues 33-55 (YTPLGSYMIFGIVHYFCSYHIGI).

Its subcellular location is the membrane. This is an uncharacterized protein from Saccharomyces cerevisiae (strain ATCC 204508 / S288c) (Baker's yeast).